Consider the following 326-residue polypeptide: WRKY transcription factor 8 (326 aa).

The segment at 115–172 (VRVSASPSSSEADHHPGEDSGKIRKKREVRDGGEDDQRSQKVVKTKKKEEKKKEPRVS) is disordered. 2 stretches are compositionally biased toward basic and acidic residues: residues 125–153 (EADH…DQRS) and 161–170 (KKEEKKKEPR). A DNA-binding region (WRKY) is located at residues 177–242 (TEVDHLEDGY…YESQHNHPIP (66 aa)).

This sequence belongs to the WRKY group II-c family. Interacts with VQ9 (via N-terminus). In terms of tissue distribution, highly expressed in roots and at lower levels in rosette leaves, cauline leaves, stems, flowers and siliques.

It localises to the nucleus. Transcription factor. Interacts specifically with the W box (5'-TTGAC[CT]-3'), a frequently occurring stress-responsive cis-acting element. Functions as a positive regulator of salt stress response. Binds the W box of LTI78/RD29A stress-response gene and directly regulates its transcription under salt stress. Functions antagonistically with VQ9 to regulate sodium and potassium homeostasis under salt stress by regulating the expression of downstream SOS (SALT OVERLY SENSITIVE) stress-responsive genes. The DNA-binding activity of WRKY8 is decreased by VQ9. Functions as a negative regulator of basal resistance to the bacterial pathogen P.syringae and as positive regulator of resistance to the fungal pathogen to B.cinerea. Functions as a positive regulator of defense response againt tobamovirus (TMV) by regulating both the abscisic acid and ethylene signaling pathways. Positively regulates ABI4 expression and negatively modulates ACS6 and ERF104 expression by directly binding to the W box consensus motifs within their promoters. This is WRKY transcription factor 8 (WRKY8) from Arabidopsis thaliana (Mouse-ear cress).